The primary structure comprises 37 residues: Photosystem II reaction center protein T (37 aa).

Residues alanine 3–phenylalanine 23 traverse the membrane as a helical segment.

Belongs to the PsbT family. In terms of assembly, PSII is composed of 1 copy each of membrane proteins PsbA, PsbB, PsbC, PsbD, PsbE, PsbF, PsbH, PsbI, PsbJ, PsbK, PsbL, PsbM, PsbT, PsbY, PsbZ, Psb30/Ycf12, at least 3 peripheral proteins of the oxygen-evolving complex and a large number of cofactors. It forms dimeric complexes.

The protein resides in the plastid. The protein localises to the chloroplast thylakoid membrane. Functionally, found at the monomer-monomer interface of the photosystem II (PS II) dimer, plays a role in assembly and dimerization of PSII. PSII is a light-driven water plastoquinone oxidoreductase, using light energy to abstract electrons from H(2)O, generating a proton gradient subsequently used for ATP formation. The polypeptide is Photosystem II reaction center protein T (Spirogyra maxima (Green alga)).